The chain runs to 187 residues: GTP cyclohydrolase 1 (187 aa).

The Zn(2+) site is built by Cys78, His81, and Cys150.

It belongs to the GTP cyclohydrolase I family. As to quaternary structure, homomer.

It carries out the reaction GTP + H2O = 7,8-dihydroneopterin 3'-triphosphate + formate + H(+). The protein operates within cofactor biosynthesis; 7,8-dihydroneopterin triphosphate biosynthesis; 7,8-dihydroneopterin triphosphate from GTP: step 1/1. The polypeptide is GTP cyclohydrolase 1 (Brevibacillus brevis (strain 47 / JCM 6285 / NBRC 100599)).